The primary structure comprises 540 residues: Chaperonin GroEL (540 aa).

ATP contacts are provided by residues 29 to 32 (TLGP), 86 to 90 (DGTTT), G413, 476 to 478 (NAA), and D492.

This sequence belongs to the chaperonin (HSP60) family. In terms of assembly, forms a cylinder of 14 subunits composed of two heptameric rings stacked back-to-back. Interacts with the co-chaperonin GroES.

It is found in the cytoplasm. The enzyme catalyses ATP + H2O + a folded polypeptide = ADP + phosphate + an unfolded polypeptide.. In terms of biological role, together with its co-chaperonin GroES, plays an essential role in assisting protein folding. The GroEL-GroES system forms a nano-cage that allows encapsulation of the non-native substrate proteins and provides a physical environment optimized to promote and accelerate protein folding. The chain is Chaperonin GroEL from Geobacillus thermodenitrificans (strain NG80-2).